A 434-amino-acid chain; its full sequence is Putative MgpC-like protein MPN_149 (434 aa).

Disordered regions lie at residues 168-193 (GSGQ…PKAV) and 215-267 (EPLD…DNNG). Residues 170–184 (GQESSWNSQRSQKVL) are compositionally biased toward polar residues. Over residues 218–229 (DSTKDGKGKDES) the composition is skewed to basic and acidic residues. A compositionally biased stretch (polar residues) spans 248–267 (STGSQMAAVTDSQQSGDNNG).

The protein belongs to the MgpC family.

The polypeptide is Putative MgpC-like protein MPN_149 (Mycoplasma pneumoniae (strain ATCC 29342 / M129 / Subtype 1) (Mycoplasmoides pneumoniae)).